The primary structure comprises 374 residues: DNA-directed RNA polymerase subunit alpha (374 aa).

The segment at 1–270 (MIFDEDSSSV…DQFQQFINFD (270 aa)) is alpha N-terminal domain (alpha-NTD). Positions 282 to 374 (KDVLPYDSNL…ESLSKQYSEE (93 aa)) are alpha C-terminal domain (alpha-CTD).

Belongs to the RNA polymerase alpha chain family. Homodimer. The RNAP catalytic core consists of 2 alpha, 1 beta, 1 beta' and 1 omega subunit. When a sigma factor is associated with the core the holoenzyme is formed, which can initiate transcription.

It carries out the reaction RNA(n) + a ribonucleoside 5'-triphosphate = RNA(n+1) + diphosphate. In terms of biological role, DNA-dependent RNA polymerase catalyzes the transcription of DNA into RNA using the four ribonucleoside triphosphates as substrates. This Ehrlichia ruminantium (strain Gardel) protein is DNA-directed RNA polymerase subunit alpha.